Reading from the N-terminus, the 128-residue chain is Small ribosomal subunit protein uS11 (128 aa).

It belongs to the universal ribosomal protein uS11 family. Part of the 30S ribosomal subunit. Interacts with proteins S7 and S18. Binds to IF-3.

In terms of biological role, located on the platform of the 30S subunit, it bridges several disparate RNA helices of the 16S rRNA. Forms part of the Shine-Dalgarno cleft in the 70S ribosome. In Wolbachia pipientis subsp. Culex pipiens (strain wPip), this protein is Small ribosomal subunit protein uS11.